The chain runs to 592 residues: MNNGRIVRINGPLVVADNMKNAQMYEVVEVGEPRLIGEITRIEGDRAFIQVYEDTSGIKPNEPVYRTGAPLSIELGPGLIGKIFDGLQRPLDSIKELTKSPFIARGIKVPSVDRKTKWHFIPKVKKGDKIEGGDIIGIVNETPLVEHRILVPPYVHGTLKEIVAEGDYTVEDPIAVVDMNGDEAPIRLMQRWPVRIPRPFREKLEPTEPLLTGTRVLDTIFPIAKGGTAAIPGPFGSGKTVTLQSLAKWSAAKIVIYVGCGERGNEMTDELRQFPSLKDPWTGRPLLERTILVANTSNMPVAAREASIYVGITMAEYFRDQGYDTLLVADSTSRWAEALRDLGGRMEEMPAEEGFPSYLPSRLAEYYERAGRVKTVGKPERFGSVTVASAVSPPGGDFTEPVTSQTLRFVKVFWPLDVSLAQARHYPAINWLQGFSAYVDLVANWWNTNVDPKWREMRDMMVRTLIREDELRQIVRLVGPESLAEKDKLVLETARLIKEAFLKQNAYDDIDAFSSPQKQARVMRLIYLFNTHASRLVERGIPTKKIVDSMGQLLPEIIRSKAAIKNDELNKYDELERKLINVFENLEKEAGT.

233–240 (GPFGSGKT) lines the ATP pocket.

The protein belongs to the ATPase alpha/beta chains family. Has multiple subunits with at least A(3), B(3), C, D, E, F, H, I and proteolipid K(x).

The protein localises to the cell membrane. The enzyme catalyses ATP + H2O + 4 H(+)(in) = ADP + phosphate + 5 H(+)(out). Functionally, component of the A-type ATP synthase that produces ATP from ADP in the presence of a proton gradient across the membrane. The A chain is the catalytic subunit. The protein is A-type ATP synthase subunit A of Saccharolobus islandicus (strain Y.G.57.14 / Yellowstone #1) (Sulfolobus islandicus).